Reading from the N-terminus, the 177-residue chain is 3-hydroxydecanoyl-[acyl-carrier-protein] dehydratase (177 aa).

Residue H76 is part of the active site.

Belongs to the thioester dehydratase family. FabA subfamily. As to quaternary structure, homodimer.

The protein localises to the cytoplasm. The catalysed reaction is a (3R)-hydroxyacyl-[ACP] = a (2E)-enoyl-[ACP] + H2O. The enzyme catalyses (3R)-hydroxydecanoyl-[ACP] = (2E)-decenoyl-[ACP] + H2O. It catalyses the reaction (2E)-decenoyl-[ACP] = (3Z)-decenoyl-[ACP]. It functions in the pathway lipid metabolism; fatty acid biosynthesis. In terms of biological role, necessary for the introduction of cis unsaturation into fatty acids. Catalyzes the dehydration of (3R)-3-hydroxydecanoyl-ACP to E-(2)-decenoyl-ACP and then its isomerization to Z-(3)-decenoyl-ACP. Can catalyze the dehydratase reaction for beta-hydroxyacyl-ACPs with saturated chain lengths up to 16:0, being most active on intermediate chain length. The polypeptide is 3-hydroxydecanoyl-[acyl-carrier-protein] dehydratase (Actinobacillus succinogenes (strain ATCC 55618 / DSM 22257 / CCUG 43843 / 130Z)).